The following is a 312-amino-acid chain: Putative HTH-type transcriptional regulatory protein TV0294 (312 aa).

One can recognise an HTH cro/C1-type domain in the interval leucine 133–histidine 186. Positions isoleucine 144 to asparagine 163 form a DNA-binding region, H-T-H motif.

This Thermoplasma volcanium (strain ATCC 51530 / DSM 4299 / JCM 9571 / NBRC 15438 / GSS1) protein is Putative HTH-type transcriptional regulatory protein TV0294.